Consider the following 530-residue polypeptide: Cytochrome P450 2U1 (530 aa).

4 helical membrane-spanning segments follow: residues 21–41, 99–119, 247–267, and 328–348; these read VRAT…GWVW, VYGN…LSDF, ICLH…YLPF, and LFYI…NSLL. C476 contacts heme. The helical transmembrane segment at 481–501 threads the bilayer; the sequence is LAKMELFLMFVSLMQTFTFAL.

This sequence belongs to the cytochrome P450 family. It depends on heme as a cofactor. Widely expressed. Expressed in heart, brain and liver.

It localises to the endoplasmic reticulum membrane. It is found in the microsome membrane. The protein resides in the mitochondrion inner membrane. It carries out the reaction an omega-methyl-long-chain fatty acid + reduced [NADPH--hemoprotein reductase] + O2 = an omega-hydroxy-long-chain fatty acid + oxidized [NADPH--hemoprotein reductase] + H2O + H(+). The enzyme catalyses (5Z,8Z,11Z,14Z)-eicosatetraenoate + reduced [NADPH--hemoprotein reductase] + O2 = 19-hydroxy-(5Z,8Z,11Z,14Z)-eicosatetraenoate + oxidized [NADPH--hemoprotein reductase] + H2O + H(+). The catalysed reaction is (5Z,8Z,11Z,14Z)-eicosatetraenoate + reduced [NADPH--hemoprotein reductase] + O2 = 20-hydroxy-(5Z,8Z,11Z,14Z)-eicosatetraenoate + oxidized [NADPH--hemoprotein reductase] + H2O + H(+). It catalyses the reaction N-[(5Z,8Z,11Z,14Z)-eicosatetraenoyl]-serotonin + reduced [NADPH--hemoprotein reductase] + O2 = 2-oxo-N-[(5Z,8Z,11Z,14Z)-eicosatetraenoyl]-serotonin + oxidized [NADPH--hemoprotein reductase] + H2O + H(+). Functionally, a cytochrome P450 monooxygenase involved in the metabolism of arachidonic acid and its conjugates. Mechanistically, uses molecular oxygen inserting one oxygen atom into a substrate, and reducing the second into a water molecule, with two electrons provided by NADPH via cytochrome P450 reductase (CPR; NADPH-ferrihemoprotein reductase). Acts as an omega and omega-1 hydroxylase for arachidonic acid and possibly for other long chain fatty acids. May modulate the arachidonic acid signaling pathway and play a role in other fatty acid signaling processes. May down-regulate the biological activities of N-arachidonoyl-serotonin, an endocannabinoid that has anti-nociceptive effects through inhibition of fatty acid amide hydrolase FAAH, TRPV1 receptor and T-type calcium channels. Catalyzes C-2 oxidation of the indole ring of N-arachidonoyl-serotonin forming a less active product 2-oxo-N-arachidonoyl-serotonin. This chain is Cytochrome P450 2U1, found in Mus musculus (Mouse).